A 796-amino-acid polypeptide reads, in one-letter code: DnaJ homolog subfamily C member 10 (796 aa).

The signal sequence occupies residues 1–33; it reads MKHSLNTATSSSSVLKRTILYLVLISLAALVYC. One can recognise a J domain in the interval 36–100; the sequence is DYYDLLGVSK…DLRKKYDKYG (65 aa). The 103-residue stretch at 131–233 folds into the Thioredoxin 1 domain; that stretch reads EIITLDRGEF…ERLVNFAMPY (103 aa). Residues Cys159 and Cys162 are joined by a disulfide bond. Trxb regions lie at residues 236–351 and 349–464; these read STVT…LPDL and PDLE…PTNF. 3 consecutive Thioredoxin domains span residues 455–554, 558–668, and 672–780; these read HVIT…IEDL, SVVT…ALMY, and ASFD…ITKR. A disulfide bond links Cys481 and Cys484. The N-linked (GlcNAc...) asparagine glycan is linked to Asn531. Intrachain disulfides connect Cys589–Cys592 and Cys701–Cys704. An N-linked (GlcNAc...) asparagine glycan is attached at Asn753. The Prevents secretion from ER signature appears at 793–796; sequence KDEL.

It localises to the endoplasmic reticulum lumen. In terms of biological role, endoplasmic reticulum disulfide reductase involved both in the correct folding of proteins and degradation of misfolded proteins. Required for efficient folding of proteins in the endoplasmic reticulum by catalyzing the removal of non-native disulfide bonds formed during the folding of proteins. Also involved in endoplasmic reticulum-associated degradation (ERAD) by reducing incorrect disulfide bonds in misfolded glycoproteins. This Xenopus laevis (African clawed frog) protein is DnaJ homolog subfamily C member 10 (dnajc10).